Consider the following 80-residue polypeptide: ATP synthase subunit c (80 aa).

2 consecutive transmembrane segments (helical) span residues 11–31 (MAAA…IGIL) and 53–73 (FFVV…LGLY).

The protein belongs to the ATPase C chain family. F-type ATPases have 2 components, F(1) - the catalytic core - and F(0) - the membrane proton channel. F(1) has five subunits: alpha(3), beta(3), gamma(1), delta(1), epsilon(1). F(0) has three main subunits: a(1), b(2) and c(10-14). The alpha and beta chains form an alternating ring which encloses part of the gamma chain. F(1) is attached to F(0) by a central stalk formed by the gamma and epsilon chains, while a peripheral stalk is formed by the delta and b chains.

The protein localises to the cell inner membrane. F(1)F(0) ATP synthase produces ATP from ADP in the presence of a proton or sodium gradient. F-type ATPases consist of two structural domains, F(1) containing the extramembraneous catalytic core and F(0) containing the membrane proton channel, linked together by a central stalk and a peripheral stalk. During catalysis, ATP synthesis in the catalytic domain of F(1) is coupled via a rotary mechanism of the central stalk subunits to proton translocation. Functionally, key component of the F(0) channel; it plays a direct role in translocation across the membrane. A homomeric c-ring of between 10-14 subunits forms the central stalk rotor element with the F(1) delta and epsilon subunits. The protein is ATP synthase subunit c of Erwinia tasmaniensis (strain DSM 17950 / CFBP 7177 / CIP 109463 / NCPPB 4357 / Et1/99).